A 621-amino-acid chain; its full sequence is Acetolactate synthase (621 aa).

Residues 1-19 (MSAPTRRPAPDAPGAAGIA) are compositionally biased toward low complexity. Residues 1 to 39 (MSAPTRRPAPDAPGAAGIAPAPPAPAAKPAAGKPKRIGP) are disordered. Glu-89 is a thiamine diphosphate binding site. FAD is bound by residues Arg-190, 296 to 317 (HGTV…LGTR), and 339 to 358 (DIDP…IVGD). Positions 432 to 512 (HDQMWAAQFI…IKVALINNGN (81 aa)) are thiamine pyrophosphate binding. Residues Asp-483 and Asn-510 each coordinate Mg(2+).

It belongs to the TPP enzyme family. Requires Mg(2+) as cofactor. It depends on thiamine diphosphate as a cofactor.

The enzyme catalyses 2 pyruvate + H(+) = (2S)-2-acetolactate + CO2. It participates in amino-acid biosynthesis; L-isoleucine biosynthesis; L-isoleucine from 2-oxobutanoate: step 1/4. It functions in the pathway amino-acid biosynthesis; L-valine biosynthesis; L-valine from pyruvate: step 1/4. This is Acetolactate synthase (ilvB) from Mycobacterium avium.